Here is a 133-residue protein sequence, read N- to C-terminus: ATP synthase epsilon chain (133 aa).

This sequence belongs to the ATPase epsilon chain family. F-type ATPases have 2 components, CF(1) - the catalytic core - and CF(0) - the membrane proton channel. CF(1) has five subunits: alpha(3), beta(3), gamma(1), delta(1), epsilon(1). CF(0) has three main subunits: a, b and c.

It localises to the cell inner membrane. In terms of biological role, produces ATP from ADP in the presence of a proton gradient across the membrane. The sequence is that of ATP synthase epsilon chain from Desulfosudis oleivorans (strain DSM 6200 / JCM 39069 / Hxd3) (Desulfococcus oleovorans).